We begin with the raw amino-acid sequence, 171 residues long: Phosphopantetheine adenylyltransferase (171 aa).

Thr-9 is a substrate binding site. ATP-binding positions include 9 to 10 (TF) and His-17. 3 residues coordinate substrate: Lys-41, Leu-73, and Arg-87. ATP is bound by residues 88–90 (GLR), Glu-98, and 123–129 (YQFISGT).

It belongs to the bacterial CoaD family. Homohexamer. Mg(2+) is required as a cofactor.

Its subcellular location is the cytoplasm. It catalyses the reaction (R)-4'-phosphopantetheine + ATP + H(+) = 3'-dephospho-CoA + diphosphate. It functions in the pathway cofactor biosynthesis; coenzyme A biosynthesis; CoA from (R)-pantothenate: step 4/5. Reversibly transfers an adenylyl group from ATP to 4'-phosphopantetheine, yielding dephospho-CoA (dPCoA) and pyrophosphate. This is Phosphopantetheine adenylyltransferase from Paraburkholderia xenovorans (strain LB400).